Consider the following 420-residue polypeptide: Histidine--tRNA ligase (420 aa).

This sequence belongs to the class-II aminoacyl-tRNA synthetase family. Homodimer.

The protein resides in the cytoplasm. The catalysed reaction is tRNA(His) + L-histidine + ATP = L-histidyl-tRNA(His) + AMP + diphosphate + H(+). This is Histidine--tRNA ligase from Thermotoga petrophila (strain ATCC BAA-488 / DSM 13995 / JCM 10881 / RKU-1).